A 138-amino-acid chain; its full sequence is ATP synthase epsilon chain (138 aa).

It belongs to the ATPase epsilon chain family. As to quaternary structure, F-type ATPases have 2 components, CF(1) - the catalytic core - and CF(0) - the membrane proton channel. CF(1) has five subunits: alpha(3), beta(3), gamma(1), delta(1), epsilon(1). CF(0) has three main subunits: a, b and c.

It is found in the cell inner membrane. In terms of biological role, produces ATP from ADP in the presence of a proton gradient across the membrane. This Psychrobacter cryohalolentis (strain ATCC BAA-1226 / DSM 17306 / VKM B-2378 / K5) protein is ATP synthase epsilon chain.